Here is a 153-residue protein sequence, read N- to C-terminus: uncharacterized protein (153 aa).

The signal sequence occupies residues 1–21; it reads MKITITSLLFFLVMIVELASA.

This is an uncharacterized protein from Saccharomyces cerevisiae (strain ATCC 204508 / S288c) (Baker's yeast).